A 125-amino-acid chain; its full sequence is Snaclec botrocetin subunit beta (125 aa).

3 disulfide bridges follow: C2–C13, C30–C121, and C98–C113. Positions 9–122 constitute a C-type lectin domain; the sequence is YEGHCYRFFK…CTRFKNFVCE (114 aa).

The protein belongs to the snaclec family. Heterodimer of subunits alpha and beta; disulfide-linked. Botrocetin and vWF form a soluble complex. Expressed by the venom gland.

It is found in the secreted. In terms of biological role, snaclec that binds to von Willebrand factor (VWF) and induces its interaction with GPIbalpha (GP1BA) (via the vWF A1 domain), resulting in platelet aggregation. The chain is Snaclec botrocetin subunit beta from Bothrops jararaca (Jararaca).